The primary structure comprises 344 residues: Heat-inducible transcription repressor HrcA (344 aa).

Belongs to the HrcA family.

Negative regulator of class I heat shock genes (grpE-dnaK-dnaJ and groELS operons). Prevents heat-shock induction of these operons. In Anoxybacillus flavithermus (strain DSM 21510 / WK1), this protein is Heat-inducible transcription repressor HrcA.